A 402-amino-acid polypeptide reads, in one-letter code: Phosphoglycerate kinase (402 aa).

Residues 24–26, Arg40, 63–66, Arg122, and Arg155 contribute to the substrate site; these read DFN and HFGR. ATP is bound by residues Lys206, Gly297, Glu328, and 358-361; that span reads GGDS.

Belongs to the phosphoglycerate kinase family. Monomer.

It localises to the cytoplasm. It catalyses the reaction (2R)-3-phosphoglycerate + ATP = (2R)-3-phospho-glyceroyl phosphate + ADP. It functions in the pathway carbohydrate degradation; glycolysis; pyruvate from D-glyceraldehyde 3-phosphate: step 2/5. This chain is Phosphoglycerate kinase, found in Prochlorococcus marinus (strain MIT 9301).